Reading from the N-terminus, the 256-residue chain is Biosynthetic peptidoglycan transglycosylase (256 aa).

The helical transmembrane segment at 26 to 48 (VARWLAYAGGVFAGAWLATQLYY) threads the bilayer.

This sequence belongs to the glycosyltransferase 51 family.

It localises to the cell inner membrane. The catalysed reaction is [GlcNAc-(1-&gt;4)-Mur2Ac(oyl-L-Ala-gamma-D-Glu-L-Lys-D-Ala-D-Ala)](n)-di-trans,octa-cis-undecaprenyl diphosphate + beta-D-GlcNAc-(1-&gt;4)-Mur2Ac(oyl-L-Ala-gamma-D-Glu-L-Lys-D-Ala-D-Ala)-di-trans,octa-cis-undecaprenyl diphosphate = [GlcNAc-(1-&gt;4)-Mur2Ac(oyl-L-Ala-gamma-D-Glu-L-Lys-D-Ala-D-Ala)](n+1)-di-trans,octa-cis-undecaprenyl diphosphate + di-trans,octa-cis-undecaprenyl diphosphate + H(+). It functions in the pathway cell wall biogenesis; peptidoglycan biosynthesis. Its function is as follows. Peptidoglycan polymerase that catalyzes glycan chain elongation from lipid-linked precursors. This is Biosynthetic peptidoglycan transglycosylase from Burkholderia thailandensis (strain ATCC 700388 / DSM 13276 / CCUG 48851 / CIP 106301 / E264).